A 168-amino-acid chain; its full sequence is Phosphopantetheine adenylyltransferase (168 aa).

Threonine 9 contacts substrate. ATP is bound by residues 9 to 10 and histidine 17; that span reads TF. Positions 41, 74, and 88 each coordinate substrate. Residues 89–91, glutamate 99, and 124–130 contribute to the ATP site; these read GLR and LQPIASR.

The protein belongs to the bacterial CoaD family. As to quaternary structure, homohexamer. Mg(2+) is required as a cofactor.

It is found in the cytoplasm. It catalyses the reaction (R)-4'-phosphopantetheine + ATP + H(+) = 3'-dephospho-CoA + diphosphate. The protein operates within cofactor biosynthesis; coenzyme A biosynthesis; CoA from (R)-pantothenate: step 4/5. Its function is as follows. Reversibly transfers an adenylyl group from ATP to 4'-phosphopantetheine, yielding dephospho-CoA (dPCoA) and pyrophosphate. This Sphingopyxis alaskensis (strain DSM 13593 / LMG 18877 / RB2256) (Sphingomonas alaskensis) protein is Phosphopantetheine adenylyltransferase.